A 95-amino-acid polypeptide reads, in one-letter code: Co-chaperonin GroES (95 aa).

It belongs to the GroES chaperonin family. Heptamer of 7 subunits arranged in a ring. Interacts with the chaperonin GroEL.

It is found in the cytoplasm. Functionally, together with the chaperonin GroEL, plays an essential role in assisting protein folding. The GroEL-GroES system forms a nano-cage that allows encapsulation of the non-native substrate proteins and provides a physical environment optimized to promote and accelerate protein folding. GroES binds to the apical surface of the GroEL ring, thereby capping the opening of the GroEL channel. The sequence is that of Co-chaperonin GroES from Rhodobacter capsulatus (Rhodopseudomonas capsulata).